The following is a 54-amino-acid chain: Synaptosomal-associated protein 25 (54 aa).

This sequence belongs to the SNAP-25 family. As to quaternary structure, part of the SNARE core complex containing SNAP25, VAMP2 and STX1A; this complex binds CPLX1. Found in a complex containing SYT1, SV2B and syntaxin-1. Found in a ternary complex with STX1A and VAMP8. Interacts with HSC70 and with SYT9, forming a complex with DNAJC5. The interaction with SYT9 is inhibited in presence of calcium. Isoform 1 and isoform 2 interact with BLOC1S6. Interacts with CENPF. Interacts with EQTN. Interacts with HGS. Interacts with KCNB1 (via N-terminus); reduces the voltage-dependent potassium channel KCNB1 activity in pancreatic beta cells. Interacts with OTOF. Interacts with RIMS1. Interacts with SNAPIN. Interacts with STXBP6. Interacts with TRIM9. Interacts with ZDHHC13 (via ANK repeats). Interacts with ZDHHC17 (via ANK repeats). Associates with the BLOC-1 complex. Interacts with PLCL1 (via C2 domain). Interacts with PRRT2; this interaction may impair the formation of the SNARE complex. Interacts with alpha-synuclein/SNCA. Interacts with PRPH2. Interacts with ROM1. Interacts with STX3. Post-translationally, the N-terminus is blocked.

The protein localises to the cytoplasm. Its subcellular location is the perinuclear region. The protein resides in the cell membrane. It is found in the synapse. It localises to the synaptosome. The protein localises to the photoreceptor inner segment. Functionally, t-SNARE involved in the molecular regulation of neurotransmitter release. May play an important role in the synaptic function of specific neuronal systems. Associates with proteins involved in vesicle docking and membrane fusion. Regulates plasma membrane recycling through its interaction with CENPF. Modulates the gating characteristics of the delayed rectifier voltage-dependent potassium channel KCNB1 in pancreatic beta cells. The polypeptide is Synaptosomal-associated protein 25 (SNAP25) (Oryctolagus cuniculus (Rabbit)).